A 510-amino-acid polypeptide reads, in one-letter code: NAD(P)H-quinone oxidoreductase subunit 2, chloroplastic (510 aa).

A run of 12 helical transmembrane segments spans residues 24–44, 59–79, 99–119, 124–144, 149–169, 183–203, 229–249, 295–315, 323–343, 347–367, 395–415, and 418–438; these read LLLFHGSFIFPECILIFGLIL, WFYFISSTSLVMSITALLFRW, IFQFLILLCSTLCIPLSVEYI, MAITEFLLFVLTATLGGMFLC, FITIFVAPECFSLCSYLLSGY, YLLMGGASSSILVHGFSWLYG, ISIALISITVGIGFKLSPAPF, WHLLLEILAILSMILGNLIAI, MLAYSSIGQIGYVIIGIIVGD, GYASMITYMLFYISMNLGTFA, ALSLALCLLSLGGLPPLAGFF, and LHLFWCGWQAGLYFLVSIGLL.

This sequence belongs to the complex I subunit 2 family. In terms of assembly, NDH is composed of at least 16 different subunits, 5 of which are encoded in the nucleus.

The protein localises to the plastid. The protein resides in the chloroplast thylakoid membrane. The catalysed reaction is a plastoquinone + NADH + (n+1) H(+)(in) = a plastoquinol + NAD(+) + n H(+)(out). It catalyses the reaction a plastoquinone + NADPH + (n+1) H(+)(in) = a plastoquinol + NADP(+) + n H(+)(out). Functionally, NDH shuttles electrons from NAD(P)H:plastoquinone, via FMN and iron-sulfur (Fe-S) centers, to quinones in the photosynthetic chain and possibly in a chloroplast respiratory chain. The immediate electron acceptor for the enzyme in this species is believed to be plastoquinone. Couples the redox reaction to proton translocation, and thus conserves the redox energy in a proton gradient. This chain is NAD(P)H-quinone oxidoreductase subunit 2, chloroplastic, found in Phormium tenax (New Zealand flax).